A 682-amino-acid polypeptide reads, in one-letter code: Heat shock 70 kDa protein, mitochondrial (682 aa).

The transit peptide at 1-57 (MATAALLRSLRRREFATSSISAYRTLASNTKPSWCPSLVGAKWAGLARPFSSKPAGN) directs the protein to the mitochondrion. Residues 649-682 (GEHMAGGSSGGASGGGGAQGGDQPPEAEYEEVKK) are disordered. The segment covering 655–668 (GSSGGASGGGGAQG) has biased composition (gly residues). A compositionally biased stretch (acidic residues) spans 673–682 (PEAEYEEVKK).

The protein belongs to the heat shock protein 70 family.

The protein localises to the mitochondrion. The chain is Heat shock 70 kDa protein, mitochondrial (HSP68) from Solanum tuberosum (Potato).